The sequence spans 249 residues: Sesquipedalian-1 (249 aa).

Residues 17 to 113 enclose the PH domain; that stretch reads PVDNAGFLYK…WVKALSRASF (97 aa). Disordered regions lie at residues 134–159 and 194–219; these read GGMALPQPQPQSLPLPPSLPSALAPV and EATFRPGPEPPPPPPRRRASAPHGPL. A compositionally biased stretch (pro residues) spans 140–152; the sequence is QPQPQSLPLPPSL. Residue serine 213 is modified to Phosphoserine. Positions 223-235 match the F&amp;H motif; it reads PFARLHECYGQEI.

This sequence belongs to the sesquipedalian family. As to quaternary structure, forms homodimers and heterodimers with PHETA2. Interacts with OCRL and INPP5B. Interaction with OCRL may be important for endosomal morphology and function.

The protein localises to the early endosome. It localises to the recycling endosome. Its subcellular location is the golgi apparatus. The protein resides in the trans-Golgi network. It is found in the cytoplasmic vesicle. The protein localises to the clathrin-coated vesicle. Plays a role in endocytic trafficking. Required for receptor recycling from endosomes, both to the trans-Golgi network and the plasma membrane. The polypeptide is Sesquipedalian-1 (Homo sapiens (Human)).